The following is a 239-amino-acid chain: LexA repressor (239 aa).

A DNA-binding region (H-T-H motif) is located at residues 26 to 46 (FDEMKDALDLASKSGIHRLIT). Positions 84-107 (SPSVIEGSLGKPQPVATPAPAKSV) are disordered. Catalysis depends on for autocatalytic cleavage activity residues serine 159 and lysine 197.

This sequence belongs to the peptidase S24 family. Homodimer.

The enzyme catalyses Hydrolysis of Ala-|-Gly bond in repressor LexA.. Represses a number of genes involved in the response to DNA damage (SOS response), including recA and lexA. In the presence of single-stranded DNA, RecA interacts with LexA causing an autocatalytic cleavage which disrupts the DNA-binding part of LexA, leading to derepression of the SOS regulon and eventually DNA repair. The protein is LexA repressor of Rhizobium johnstonii (strain DSM 114642 / LMG 32736 / 3841) (Rhizobium leguminosarum bv. viciae).